The following is a 141-amino-acid chain: NADH dehydrogenase [ubiquinone] 1 alpha subcomplex subunit 11 (141 aa).

Alanine 2 is modified (N-acetylalanine). 2 helical membrane-spanning segments follow: residues 22-43 (TYATTSIGGAAGLVVSAYSVAL) and 58-80 (RYTFTAAAIGAIFGLTSCISAQV).

As to quaternary structure, complex I is composed of 45 different subunits.

Its subcellular location is the mitochondrion inner membrane. Functionally, accessory subunit of the mitochondrial membrane respiratory chain NADH dehydrogenase (Complex I), that is believed not to be involved in catalysis. Complex I functions in the transfer of electrons from NADH to the respiratory chain. The immediate electron acceptor for the enzyme is believed to be ubiquinone. The protein is NADH dehydrogenase [ubiquinone] 1 alpha subcomplex subunit 11 (NDUFA11) of Bos taurus (Bovine).